The following is a 446-amino-acid chain: Scytalone dehydratase-like protein Arp1 (446 aa).

Tyr323 is a binding site for substrate. Active-site residues include His358 and His383. Asn404 is a binding site for substrate.

It belongs to the scytalone dehydratase family. Homotrimer. Each subunit contains an active site, located in the central part of the hydrophobic core of the monomer, which functions independently.

Its function is as follows. Scytalone dehydratase-like protein; part of the Pks2 gene cluster that mediates the formation of infectious structures (appressoria), enabling these fungi to kill insects faster. The product of the Pks2 gene cluster is different from the one of Pks1 and has still not been identified. The polypeptide is Scytalone dehydratase-like protein Arp1 (Metarhizium acridum (strain CQMa 102)).